We begin with the raw amino-acid sequence, 265 residues long: MSQASSTDTPFVIAGRTYGSRLLVGTGKYKDLDETRRAIEASGAEIVTVAVRRTNIGQNPGEPNLLDVIPPDRYTILPNTAGCYDAVEAVRTCRLARELLDGHNLVKLEVLADQKTLFPNVVETLKAAEQLVKDGFDVMVYTSDDPIIARQLAEIGCIAVMPLAGLIGSGLGICNPYNLRIILEEAKVPVLVDAGVGTASDAAIAMELGCEAVLMNTAIAHARDPVMMAEAMKHAIVAGRLAYLAGRMPRKLYASASSPLDGLID.

Lys-107 (schiff-base intermediate with DXP) is an active-site residue. Residues Gly-168, 194–195 (AG), and 216–217 (NT) contribute to the 1-deoxy-D-xylulose 5-phosphate site.

The protein belongs to the ThiG family. In terms of assembly, homotetramer. Forms heterodimers with either ThiH or ThiS.

Its subcellular location is the cytoplasm. It catalyses the reaction [ThiS sulfur-carrier protein]-C-terminal-Gly-aminoethanethioate + 2-iminoacetate + 1-deoxy-D-xylulose 5-phosphate = [ThiS sulfur-carrier protein]-C-terminal Gly-Gly + 2-[(2R,5Z)-2-carboxy-4-methylthiazol-5(2H)-ylidene]ethyl phosphate + 2 H2O + H(+). It functions in the pathway cofactor biosynthesis; thiamine diphosphate biosynthesis. Catalyzes the rearrangement of 1-deoxy-D-xylulose 5-phosphate (DXP) to produce the thiazole phosphate moiety of thiamine. Sulfur is provided by the thiocarboxylate moiety of the carrier protein ThiS. In vitro, sulfur can be provided by H(2)S. The chain is Thiazole synthase from Pseudomonas paraeruginosa (strain DSM 24068 / PA7) (Pseudomonas aeruginosa (strain PA7)).